Here is a 786-residue protein sequence, read N- to C-terminus: Tyrosine-protein kinase Btk (786 aa).

The tract at residues 1-23 (MMGTKHRNSHVNGSIKSSSSLRS) is disordered. Low complexity predominate over residues 14–23 (SIKSSSSLRS). Residues 41 to 184 (DVVKSGSMVK…WIRAIRQVCE (144 aa)) form the PH domain. The segment at 187–223 (NTPKSYRYHPGLWSGKKWSCCKGLSRTTFGCRAAAHW) adopts a Btk-type zinc-finger fold. Positions 195, 206, 207, and 217 each coordinate Zn(2+). Positions 226-240 (ANNNPSNGSSPAQNS) are enriched in low complexity. Residues 226–301 (ANNNPSNGSS…TPTSLQPQSS (76 aa)) are disordered. A compositionally biased stretch (polar residues) spans 241–260 (TRSISPNSSTTNSQFSLQHN). Over residues 264–290 (SLGGGVGGGLGGGGSLGLGGGGGGGGS) the composition is skewed to gly residues. Residues 291-301 (CTPTSLQPQSS) show a composition bias toward polar residues. The SH3 domain occupies 342–402 (HFVKLVVALY…PSNYVKPKAL (61 aa)). Residues 410–503 (WYVGDMSRQR…GLACRLKSSP (94 aa)) form the SH2 domain. The Protein kinase domain occupies 526–779 (LMLMEELGSG…FRVLMDQLAL (254 aa)). ATP contacts are provided by residues 532-540 (LGSGQFGVV) and lysine 554. Catalysis depends on aspartate 647, which acts as the Proton acceptor. A Phosphotyrosine; by autocatalysis modification is found at tyrosine 677.

This sequence belongs to the protein kinase superfamily. Tyr protein kinase family. TEC subfamily. Zn(2+) is required as a cofactor. As to expression, ring canals in the egg chambers and imaginal disks of third-instar larvae.

It catalyses the reaction L-tyrosyl-[protein] + ATP = O-phospho-L-tyrosyl-[protein] + ADP + H(+). Required for proper ring canal development. Also required for the development of male genitalia and for adult survival. This is Tyrosine-protein kinase Btk from Drosophila melanogaster (Fruit fly).